The following is a 510-amino-acid chain: Maturase K (510 aa).

It belongs to the intron maturase 2 family. MatK subfamily.

Its subcellular location is the plastid. Functionally, usually encoded in the trnK tRNA gene intron. Probably assists in splicing its own and other chloroplast group II introns. In Bartsia alpina (Velvet bells), this protein is Maturase K.